We begin with the raw amino-acid sequence, 320 residues long: Mitochondrial thiamine pyrophosphate carrier (320 aa).

3 Solcar repeats span residues 13 to 106, 116 to 202, and 214 to 309; these read NTKF…LTEL, REFS…LKHL, and NENL…FCNV. A helical membrane pass occupies residues 19-39; sequence AVAGSVSGLVTRALISPFDVI. Ser51 is modified (phosphoserine). The next 4 helical transmembrane spans lie at 87–107, 122–142, 173–193, and 220–240; these read ILSI…TELV, FVCG…VDVL, VFYK…GLQF, and LLCG…LDLF. The short motif at 241–246 is the Substrate recognition element; it reads KKRLQV. A helical membrane pass occupies residues 293–313; that stretch reads ALSTGFMFFWYEFFCNVFHCM.

The protein belongs to the mitochondrial carrier (TC 2.A.29) family.

It localises to the mitochondrion membrane. It catalyses the reaction thiamine phosphate(out) + thiamine diphosphate(in) = thiamine phosphate(in) + thiamine diphosphate(out). Functionally, mitochondrial transporter mediating uptake of thiamine diphosphate into mitochondria. It is not clear if the antiporter activity is affected by the membrane potential or by the proton electrochemical gradient. This chain is Mitochondrial thiamine pyrophosphate carrier (SLC25A19), found in Pongo abelii (Sumatran orangutan).